A 121-amino-acid polypeptide reads, in one-letter code: Large ribosomal subunit protein bL12 (121 aa).

Belongs to the bacterial ribosomal protein bL12 family. As to quaternary structure, homodimer. Part of the ribosomal stalk of the 50S ribosomal subunit. Forms a multimeric L10(L12)X complex, where L10 forms an elongated spine to which 2 to 4 L12 dimers bind in a sequential fashion. Binds GTP-bound translation factors.

Its function is as follows. Forms part of the ribosomal stalk which helps the ribosome interact with GTP-bound translation factors. Is thus essential for accurate translation. This Shewanella baltica (strain OS185) protein is Large ribosomal subunit protein bL12.